Here is a 273-residue protein sequence, read N- to C-terminus: Proteasome subunit beta type-10 (273 aa).

Residue Met-1 is modified to N-acetylmethionine. Positions 1 to 39 (MQKTVLEPQRGFSFENCERNAALQRALPGLRVPHARKTG) are cleaved as a propeptide — removed in mature form. Thr-40 functions as the Nucleophile in the catalytic mechanism. At Ser-230 the chain carries Phosphoserine.

Belongs to the peptidase T1B family. In terms of assembly, the 26S proteasome consists of a 20S proteasome core and two 19S regulatory subunits. The 20S proteasome core is composed of 28 subunits that are arranged in four stacked rings, resulting in a barrel-shaped structure. The two end rings are each formed by seven alpha subunits, and the two central rings are each formed by seven beta subunits. The catalytic chamber with the active sites is on the inside of the barrel. Component of the immunoproteasome, where it displaces the equivalent housekeeping subunit PSMB7. Component of the spermatoproteasome, a form of the proteasome specifically found in testis. In terms of processing, autocleaved. The resulting N-terminal Thr residue of the mature subunit is responsible for the nucleophile proteolytic activity.

It localises to the cytoplasm. The protein localises to the nucleus. It catalyses the reaction Cleavage of peptide bonds with very broad specificity.. In terms of biological role, the proteasome is a multicatalytic proteinase complex which is characterized by its ability to cleave peptides with Arg, Phe, Tyr, Leu, and Glu adjacent to the leaving group at neutral or slightly basic pH. The proteasome has an ATP-dependent proteolytic activity. This subunit is involved in antigen processing to generate class I binding peptides. The protein is Proteasome subunit beta type-10 (PSMB10) of Bos taurus (Bovine).